Consider the following 400-residue polypeptide: Renin (400 aa).

An N-terminal signal peptide occupies residues 1 to 23 (MDAWRGMPRWGLLLLLWGSCTFG). Residues 24 to 60 (LPTETTTFKRISLKRMPSIRESLKERGVDMARLGPER) constitute a propeptide, activation peptide. A glycan (N-linked (GlcNAc...) asparagine) is linked at Asn65. In terms of domain architecture, Peptidase A1 spans 80 to 397 (YYGEIGIGTP…DRGNNRIGFA (318 aa)). Residue Asp98 is part of the active site. Cys111 and Cys118 are joined by a disulfide. N-linked (GlcNAc...) asparagine glycosylation is present at Asn135. An intrachain disulfide couples Cys277 to Cys281. Asp286 is a catalytic residue. Cys319 and Cys356 are oxidised to a cystine.

The protein belongs to the peptidase A1 family. Interacts with ATP6AP2.

Its subcellular location is the secreted. The protein localises to the membrane. The enzyme catalyses Cleavage of Leu-|-Xaa bond in angiotensinogen to generate angiotensin I.. Its activity is regulated as follows. Interaction with ATP6AP2 results in a 5-fold increased efficiency in angiotensinogen processing. In terms of biological role, renin is a highly specific endopeptidase, whose only known function is to generate angiotensin I from angiotensinogen in the plasma, initiating a cascade of reactions that produce an elevation of blood pressure and increased sodium retention by the kidney. The protein is Renin (REN) of Callithrix jacchus (White-tufted-ear marmoset).